The chain runs to 243 residues: RNA-binding protein with serine-rich domain 1 homolog (243 aa).

Residues 48-92 (SSTRQFNNTRSPSGRSASRSSNFSHRSSSRDSFSSNRSYSSSLSR) are disordered. Residues 57-92 (RSPSGRSASRSSNFSHRSSSRDSFSSNRSYSSSLSR) show a composition bias toward low complexity. An RRM domain is found at 99–177 (RTILVENLTR…EELFVSIKRF (79 aa)). A disordered region spans residues 189-243 (YENSYRPSRSQNNSHYNDKSFHRSRYSRARSRSPGSNISEYSDQSPPYHSYRHRP). A compositionally biased stretch (polar residues) spans 193–203 (YRPSRSQNNSH). Residues 210-219 (HRSRYSRARS) show a composition bias toward basic residues. Residues 222–235 (PGSNISEYSDQSPP) are compositionally biased toward polar residues.

Belongs to the splicing factor SR family. Component of the active spliceosome.

It is found in the cytoplasm. The protein localises to the nucleus. In terms of biological role, putative component of the spliceosome which enhances the formation of the ATP-dependent A complex of the spliceosome. may participate in mRNA 3'-end cleavage. Also mediates increase of mRNA abundance and translational efficiency. The chain is RNA-binding protein with serine-rich domain 1 homolog from Schizosaccharomyces pombe (strain 972 / ATCC 24843) (Fission yeast).